Reading from the N-terminus, the 459-residue chain is ADP-specific phosphofructokinase (459 aa).

Residues 1–457 form the ADPK domain; sequence MMEFLKDFQK…FASYLSLLKR (457 aa). Glutamate 268, glutamate 298, and aspartate 441 together coordinate Mg(2+). Residue aspartate 441 is the Proton acceptor of the active site.

The protein belongs to the carbohydrate kinase PfkC family. Mg(2+) is required as a cofactor.

The protein resides in the cytoplasm. The catalysed reaction is beta-D-fructose 6-phosphate + ADP = beta-D-fructose 1,6-bisphosphate + AMP + H(+). It participates in carbohydrate degradation; glycolysis. Catalyzes the phosphorylation of fructose 6-phosphate to fructose 1,6-bisphosphate using ADP as the phosphate donor. This Thermococcus litoralis protein is ADP-specific phosphofructokinase.